The sequence spans 440 residues: C4-dicarboxylate transport protein (440 aa).

The next 8 membrane-spanning stretches (helical) occupy residues 8–28 (LYLQVLLAVVLGALVGHLFPA), 40–60 (FIKLVKMLIAPIVFATVVTGI), 74–94 (LKGLLYFEVLTTVALAIGLVV), 147–167 (GDILQVLLFSVLFGAALAALK), 187–207 (IVGFVMRLAPVGAFGAMAFTV), 221–241 (LIACFYATSALFVVLMLGLVL), 288–308 (VVGLVVPMGYSFNLDGTSIYL), and 354–374 (AATLSAVGNIPVAGLALLLGV). Residues 419 to 440 (EEVEPANEPEPPAVPAGAGLHG) are disordered.

This sequence belongs to the dicarboxylate/amino acid:cation symporter (DAACS) (TC 2.A.23) family.

The protein resides in the cell inner membrane. Its function is as follows. Responsible for the transport of dicarboxylates such as succinate, fumarate, and malate from the periplasm across the membrane. The protein is C4-dicarboxylate transport protein of Anaeromyxobacter dehalogenans (strain 2CP-1 / ATCC BAA-258).